A 67-amino-acid chain; its full sequence is Large ribosomal subunit protein bL35 (67 aa).

Basic residues predominate over residues 1 to 16 (MPKMKTKSSAKKRFRV). A disordered region spans residues 1 to 24 (MPKMKTKSSAKKRFRVRPGGTVKR).

It belongs to the bacterial ribosomal protein bL35 family.

The protein is Large ribosomal subunit protein bL35 of Verminephrobacter eiseniae (strain EF01-2).